We begin with the raw amino-acid sequence, 114 residues long: Tyrosine-protein phosphatase 27 (114 aa).

The 114-residue stretch at 1-114 (WQMIVEHKCC…ELGNDNPIVV (114 aa)) folds into the Tyrosine-protein phosphatase domain. Asp82 contacts substrate.

It belongs to the protein-tyrosine phosphatase family.

The catalysed reaction is O-phospho-L-tyrosyl-[protein] + H2O = L-tyrosyl-[protein] + phosphate. This is Tyrosine-protein phosphatase 27 (STY-27) from Styela plicata (Wrinkled sea squirt).